Reading from the N-terminus, the 511-residue chain is Probable eukaryotic translation initiation factor 4H (511 aa).

Disordered stretches follow at residues 25–63 and 154–511; these read SWAD…DRGS and TIRV…EVKI. Basic and acidic residues predominate over residues 39–51; sequence AREESGSGLKRGD. In terms of domain architecture, RRM spans 86 to 162; that stretch reads FTAFIGNLSF…RTIRVNVAEA (77 aa). Residues 179-196 show a composition bias toward polar residues; sequence WRRSTPLASRESSSQPSR. 2 stretches are compositionally biased toward basic and acidic residues: residues 230-247 and 261-270; these read VRRD…RDPG and LAEKVDRDVP. The segment covering 285–318 has biased composition (polar residues); the sequence is LADTEQTWSRGTKLRTPTTTSRQSSADSTPSSGA. Residues 331 to 349 are compositionally biased toward low complexity; sequence TAGSPSATANATPAAPASG. Residue Ser334 is modified to Phosphoserine. Composition is skewed to basic and acidic residues over residues 360–388 and 394–419; these read AARE…EKQK and KPVE…DKVA. The segment covering 420–434 has biased composition (low complexity); it reads GKPTTAPATTTNTGA. A compositionally biased stretch (basic and acidic residues) spans 438-448; that stretch reads GSADRAKKDEQ. Positions 451–467 are enriched in polar residues; sequence EQVQPSRKSSQTGATSE. Basic and acidic residues predominate over residues 502-511; it reads VTKGVEEVKI.

It localises to the cytoplasm. The protein localises to the P-body. Probable translation initiation factor. The sequence is that of Probable eukaryotic translation initiation factor 4H from Cryptococcus neoformans var. grubii serotype A (strain H99 / ATCC 208821 / CBS 10515 / FGSC 9487) (Filobasidiella neoformans var. grubii).